A 659-amino-acid chain; its full sequence is DNA ligase (659 aa).

Residues 32–36, 81–82, and Glu110 contribute to the NAD(+) site; these read DAEYD and SL. Lys112 (N6-AMP-lysine intermediate) is an active-site residue. 4 residues coordinate NAD(+): Arg133, Glu168, Lys284, and Lys308. Residues Cys402, Cys405, Cys420, and Cys425 each contribute to the Zn(2+) site. One can recognise a BRCT domain in the interval 582-659; the sequence is AKPQIFAGKS…SEEEFAELLP (78 aa).

The protein belongs to the NAD-dependent DNA ligase family. LigA subfamily. Mg(2+) serves as cofactor. Requires Mn(2+) as cofactor.

The catalysed reaction is NAD(+) + (deoxyribonucleotide)n-3'-hydroxyl + 5'-phospho-(deoxyribonucleotide)m = (deoxyribonucleotide)n+m + AMP + beta-nicotinamide D-nucleotide.. DNA ligase that catalyzes the formation of phosphodiester linkages between 5'-phosphoryl and 3'-hydroxyl groups in double-stranded DNA using NAD as a coenzyme and as the energy source for the reaction. It is essential for DNA replication and repair of damaged DNA. The protein is DNA ligase of Desulfitobacterium hafniense (strain Y51).